The sequence spans 451 residues: Probable D-serine dehydratase (451 aa).

Residue lysine 119 is modified to N6-(pyridoxal phosphate)lysine.

This sequence belongs to the serine/threonine dehydratase family. DsdA subfamily. Requires pyridoxal 5'-phosphate as cofactor.

It carries out the reaction D-serine = pyruvate + NH4(+). The polypeptide is Probable D-serine dehydratase (Acidovorax sp. (strain JS42)).